The following is a 133-amino-acid chain: Small ribosomal subunit protein uS8 (133 aa).

It belongs to the universal ribosomal protein uS8 family. In terms of assembly, part of the 30S ribosomal subunit. Contacts proteins S5 and S12.

Functionally, one of the primary rRNA binding proteins, it binds directly to 16S rRNA central domain where it helps coordinate assembly of the platform of the 30S subunit. The protein is Small ribosomal subunit protein uS8 of Prochlorococcus marinus (strain MIT 9312).